Here is an 80-residue protein sequence, read N- to C-terminus: Cell division protein ZapB (80 aa).

Residues 3–80 are a coiled coil; sequence FEVLEQLEAK…NLLGKMDDVE (78 aa).

Belongs to the ZapB family. Homodimer. The ends of the coiled-coil dimer bind to each other, forming polymers. Interacts with FtsZ.

It localises to the cytoplasm. Functionally, non-essential, abundant cell division factor that is required for proper Z-ring formation. It is recruited early to the divisome by direct interaction with FtsZ, stimulating Z-ring assembly and thereby promoting cell division earlier in the cell cycle. Its recruitment to the Z-ring requires functional FtsA or ZipA. This Vibrio atlanticus (strain LGP32) (Vibrio splendidus (strain Mel32)) protein is Cell division protein ZapB.